The sequence spans 669 residues: UvrABC system protein B (669 aa).

The 388-residue stretch at 27 to 414 folds into the Helicase ATP-binding domain; sequence ESLQGEHKFQ…EARVIEQVIR (388 aa). Residue 40 to 47 participates in ATP binding; sequence GATGTGKT. The short motif at 93–116 is the Beta-hairpin element; sequence YYDYYQPEAYIPVTDTYIEKTASI. Residues 431-597 form the Helicase C-terminal domain; the sequence is QVDDLYGEIQ…PINKRANNAI (167 aa). One can recognise a UVR domain in the interval 628-663; the sequence is PDLIQQLEEKMQEAAKKQEFEVAAIYRDRIQHLRDR.

Belongs to the UvrB family. As to quaternary structure, forms a heterotetramer with UvrA during the search for lesions. Interacts with UvrC in an incision complex.

The protein localises to the cytoplasm. Its function is as follows. The UvrABC repair system catalyzes the recognition and processing of DNA lesions. A damage recognition complex composed of 2 UvrA and 2 UvrB subunits scans DNA for abnormalities. Upon binding of the UvrA(2)B(2) complex to a putative damaged site, the DNA wraps around one UvrB monomer. DNA wrap is dependent on ATP binding by UvrB and probably causes local melting of the DNA helix, facilitating insertion of UvrB beta-hairpin between the DNA strands. Then UvrB probes one DNA strand for the presence of a lesion. If a lesion is found the UvrA subunits dissociate and the UvrB-DNA preincision complex is formed. This complex is subsequently bound by UvrC and the second UvrB is released. If no lesion is found, the DNA wraps around the other UvrB subunit that will check the other stand for damage. The sequence is that of UvrABC system protein B from Synechocystis sp. (strain ATCC 27184 / PCC 6803 / Kazusa).